Reading from the N-terminus, the 314-residue chain is MTYVGQSASAAQQSVAERASVKDVLAAYVGLTKPRVIELLLLTTVPVMFFADRGIPELWLVVATVVGGAFSAGSASVFNCVYDRDIDEQMRRTRRRALPRHIVSPAAALVFGFVLGILSTVILYVWVNPLSAALSVAANAFYVLVYTMLLKRRTTQNIVWGGLAGCFPALIGWTAVTGSLSWVPVVLFAVVFFWTPPHTWALALRYREDYANVDVPMLPVVAPAREVGRQVVIYSWVMVATSLLLWPVAGTGIFYPIAAGVLGAVFLLEAHRMWARSRDTESLSVIQPMRLFHSSNLYLSLLFVAVALDPLLAG.

7 consecutive transmembrane segments (helical) span residues 58 to 78 (LWLVVATVVGGAFSAGSASVF), 107 to 127 (AALVFGFVLGILSTVILYVWV), 130 to 150 (LSAALSVAANAFYVLVYTMLL), 173 to 193 (WTAVTGSLSWVPVVLFAVVFF), 227 to 247 (VGRQVVIYSWVMVATSLLLWP), 248 to 268 (VAGTGIFYPIAAGVLGAVFLL), and 294 to 314 (SSNLYLSLLFVAVALDPLLAG).

The protein belongs to the UbiA prenyltransferase family. Protoheme IX farnesyltransferase subfamily.

The protein resides in the cell membrane. The enzyme catalyses heme b + (2E,6E)-farnesyl diphosphate + H2O = Fe(II)-heme o + diphosphate. It functions in the pathway porphyrin-containing compound metabolism; heme O biosynthesis; heme O from protoheme: step 1/1. Converts heme B (protoheme IX) to heme O by substitution of the vinyl group on carbon 2 of heme B porphyrin ring with a hydroxyethyl farnesyl side group. This is Protoheme IX farnesyltransferase from Nocardioides sp. (strain ATCC BAA-499 / JS614).